A 210-amino-acid chain; its full sequence is Probable molybdenum cofactor guanylyltransferase (210 aa).

GTP is bound by residues 18 to 20 (LAG), lysine 31, asparagine 59, aspartate 86, and aspartate 111. Aspartate 111 is a Mg(2+) binding site.

It belongs to the MobA family. Mg(2+) is required as a cofactor.

It localises to the cytoplasm. It carries out the reaction Mo-molybdopterin + GTP + H(+) = Mo-molybdopterin guanine dinucleotide + diphosphate. Functionally, transfers a GMP moiety from GTP to Mo-molybdopterin (Mo-MPT) cofactor (Moco or molybdenum cofactor) to form Mo-molybdopterin guanine dinucleotide (Mo-MGD) cofactor. In Haloferax mediterranei (strain ATCC 33500 / DSM 1411 / JCM 8866 / NBRC 14739 / NCIMB 2177 / R-4) (Halobacterium mediterranei), this protein is Probable molybdenum cofactor guanylyltransferase (nasC).